A 120-amino-acid chain; its full sequence is Large ribosomal subunit protein uL18 (120 aa).

This sequence belongs to the universal ribosomal protein uL18 family. In terms of assembly, part of the 50S ribosomal subunit; part of the 5S rRNA/L5/L18/L25 subcomplex. Contacts the 5S and 23S rRNAs.

Functionally, this is one of the proteins that bind and probably mediate the attachment of the 5S RNA into the large ribosomal subunit, where it forms part of the central protuberance. In Bacillus cereus (strain ATCC 10987 / NRS 248), this protein is Large ribosomal subunit protein uL18.